Consider the following 194-residue polypeptide: Small ribosomal subunit protein uS4c (194 aa).

An S4 RNA-binding domain is found at 82-143; it reads MRLDNILFRL…KERSKVLIQN (62 aa).

This sequence belongs to the universal ribosomal protein uS4 family. Part of the 30S ribosomal subunit. Contacts protein S5. The interaction surface between S4 and S5 is involved in control of translational fidelity.

The protein localises to the plastid. The protein resides in the chloroplast. Functionally, one of the primary rRNA binding proteins, it binds directly to 16S rRNA where it nucleates assembly of the body of the 30S subunit. Its function is as follows. With S5 and S12 plays an important role in translational accuracy. The polypeptide is Small ribosomal subunit protein uS4c (rps4) (Trimezia steyermarkii (Steyermark's trimezia)).